Reading from the N-terminus, the 371-residue chain is Glutamate 5-kinase (371 aa).

K14 contributes to the ATP binding site. S54, D141, and N153 together coordinate substrate. 173-174 contributes to the ATP binding site; that stretch reads TD. Residues 280-357 form the PUA domain; it reads AGSLIVDAGA…SDIEQLLGYI (78 aa).

This sequence belongs to the glutamate 5-kinase family.

Its subcellular location is the cytoplasm. The catalysed reaction is L-glutamate + ATP = L-glutamyl 5-phosphate + ADP. Its pathway is amino-acid biosynthesis; L-proline biosynthesis; L-glutamate 5-semialdehyde from L-glutamate: step 1/2. Catalyzes the transfer of a phosphate group to glutamate to form L-glutamate 5-phosphate. The chain is Glutamate 5-kinase from Azoarcus sp. (strain BH72).